Here is a 458-residue protein sequence, read N- to C-terminus: MALWGGRFTQAADQRFKQFNDSLRFDYRLAEQDIVGSVAWSKALVTVGVLTADEQRQLEEALNVLLEEVRANPQQILQSDAEDIHSWVEGKLIDKVGQLGKKLHTGRSRNDQVATDLKLWCKETVRELLTANRQLQSALVETAQANQDAVMPGYTHLQRAQPVTFAHWCLAYVEMLARDESRLQDTLKRLDVSPLGCGALAGTAYEIDREQLAGWLGFASATRNSLDSVSDRDHVLELLSDAAIGMVHLSRFAEDLIFFNSGEAGFVELSDRVTSGSSLMPQKKNPDALELIRGKCGRVQGALTGMMMTLKGLPLAYNKDMQEDKEGLFDALDTWLDCLHMAALVLDGIQVKRPRCQDAAQQGYANATELADYLVAKGVPFREAHHIVGEAVVEAIRQGKPLEALPLADLQKFSRVIGDDVYPILSLQSCLDKRAAKGGVSPLQVAQAINDAKARLAL.

Belongs to the lyase 1 family. Argininosuccinate lyase subfamily.

Its subcellular location is the cytoplasm. The catalysed reaction is 2-(N(omega)-L-arginino)succinate = fumarate + L-arginine. It participates in amino-acid biosynthesis; L-arginine biosynthesis; L-arginine from L-ornithine and carbamoyl phosphate: step 3/3. This is Argininosuccinate lyase from Salmonella newport (strain SL254).